Here is a 411-residue protein sequence, read N- to C-terminus: Translation initiation factor 2 subunit gamma (411 aa).

One can recognise a tr-type G domain in the interval 9-203 (QAEVNIGMVG…AIEDFIPTPK (195 aa)). Residues 18-25 (GHVDHGKT) are G1. Mg(2+)-binding residues include aspartate 21, threonine 25, glycine 46, and threonine 48. Residue 21 to 26 (DHGKTT) participates in GTP binding. Positions 46–50 (GITIK) are G2. Zn(2+)-binding residues include cysteine 61, cysteine 64, cysteine 73, and cysteine 76. A G3 region spans residues 90-93 (DAPG). Residues 146 to 149 (NKIE) and 181 to 183 (SAL) each bind GTP. Residues 146-149 (NKIE) form a G4 region. The segment at 181-183 (SAL) is G5.

Belongs to the TRAFAC class translation factor GTPase superfamily. Classic translation factor GTPase family. EIF2G subfamily. Heterotrimer composed of an alpha, a beta and a gamma chain. The cofactor is Mg(2+).

The enzyme catalyses GTP + H2O = GDP + phosphate + H(+). EIF-2 functions in the early steps of protein synthesis by forming a ternary complex with GTP and initiator tRNA. This is Translation initiation factor 2 subunit gamma from Pyrococcus abyssi (strain GE5 / Orsay).